The primary structure comprises 233 residues: 4'-phosphopantetheinyl transferase psf-1 (233 aa).

Asp110, Glu112, and Glu154 together coordinate Mg(2+). Residues 161–192 (GKGISYGLSSFTARLSEDGQATLRLPDHEAPC) form a peptidyl carrier protein binding region.

The protein belongs to the P-Pant transferase superfamily. Gsp/Sfp/HetI/AcpT family. Mg(2+) serves as cofactor.

The enzyme catalyses apo-[peptidyl-carrier protein] + CoA = holo-[peptidyl-carrier protein] + adenosine 3',5'-bisphosphate + H(+). Its function is as follows. Probably activates the peptidyl carrier protein (PCP) domains of surfactin synthetase by transferring the 4'-phosphopantetheinyl moiety of coenzyme A (CoA) to a serine residue. Required for the production of the lipopeptide antibiotic, surfactin. The protein is 4'-phosphopantetheinyl transferase psf-1 (psf-1) of Bacillus pumilus (Bacillus mesentericus).